We begin with the raw amino-acid sequence, 1087 residues long: Platelet-derived growth factor receptor alpha (1087 aa).

The signal sequence occupies residues 1–24 (MMPAMRASLILGCLLIIGPWAILA). Topologically, residues 25 to 530 (ENPLPTIFPD…PTLRSELTVA (506 aa)) are extracellular. 2 consecutive Ig-like C2-type domains span residues 27–114 (PLPT…SEIE) and 118–211 (IYIY…LQTW). Cys50 and Cys101 form a disulfide bridge. N-linked (GlcNAc...) asparagine glycosylation is found at Asn77 and Asn104. Cysteines 151 and 192 form a disulfide. Asn216, Asn282, Asn309, Asn356, Asn362, Asn461, and Asn471 each carry an N-linked (GlcNAc...) asparagine glycan. Ig-like C2-type domains lie at 217-309 (ISVE…KKTN), 315-409 (KGFI…KSYS), and 417-519 (PALI…LKLV). Cys238 and Cys293 are disulfide-bonded. A disulfide bond links Cys438 and Cys503. The helical transmembrane segment at 531-551 (AAVLVLLVIVIISLIVLVIIW) threads the bilayer. Residues 552–1087 (KQKPRYEIRW…SSDLVEDSFL (536 aa)) are Cytoplasmic-facing. A phosphotyrosine; by autocatalysis mark is found at Tyr574 and Tyr576. The Protein kinase domain occupies 595 to 970 (LVLGRILGSG…CYETVLHDFL (376 aa)). ATP contacts are provided by residues 601 to 609 (LGSGAFGKV) and Lys629. A phosphotyrosine; by autocatalysis mark is found at Tyr722, Tyr733, Tyr744, Tyr756, and Tyr764. Residue Asp818 is the Proton acceptor of the active site. 3 positions are modified to phosphotyrosine; by autocatalysis: Tyr849, Tyr988, and Tyr1017. Positions 1017–1064 (YIIPLPDIDPVSEDESGKRNRHSSQTSEESAIETGSSSSTFIKRDDET) are disordered. Positions 1039–1057 (SSQTSEESAIETGSSSSTF) are enriched in polar residues.

It belongs to the protein kinase superfamily. Tyr protein kinase family. CSF-1/PDGF receptor subfamily. Interacts with homodimeric pdgfa, pdgfb and pdgfc, and with heterodimers formed by pdgfa and pdgfb. Monomer in the absence of bound ligand. Interaction with dimeric pdgfa, pdgfb and/or pdgfc leads to receptor dimerization, where both pdgfra homodimers and heterodimers with pdgfrb are observed. Post-translationally, ubiquitinated, leading to its internalization and degradation. Autophosphorylated on tyrosine residues upon ligand binding. Autophosphorylation occurs in trans, i.e. one subunit of the dimeric receptor phosphorylates tyrosine residues on the other subunit.

The protein resides in the cell membrane. It localises to the cell projection. It is found in the cilium. The protein localises to the golgi apparatus. The catalysed reaction is L-tyrosyl-[protein] + ATP = O-phospho-L-tyrosyl-[protein] + ADP + H(+). Its activity is regulated as follows. Present in an inactive conformation in the absence of bound ligand. Binding of pdgfa and/or pdgfb leads to dimerization and activation by autophosphorylation on tyrosine residues. Functionally, tyrosine-protein kinase that acts as a cell-surface receptor for pdgfa, pdgfb and pdgfc and plays an essential role in the regulation of embryonic development, cell proliferation, survival and chemotaxis. Depending on the context, promotes or inhibits cell proliferation and cell migration. Plays an important role in the differentiation of bone marrow-derived mesenchymal stem cells. Required for normal skeleton development. Required for normal development of the gastrointestinal tract. Plays a role in cell migration and chemotaxis in wound healing. Plays a role in platelet activation, secretion of agonists from platelet granules, and in thrombin-induced platelet aggregation. Binding of its cognate ligands - homodimeric pdgfa, homodimeric pdgfb, heterodimers formed by pdgfa and pdgfb or homodimeric pdgfc -leads to the activation of several signaling cascades; the response depends on the nature of the bound ligand and is modulated by the formation of heterodimers between pdgfra and pdgfrb. Phosphorylates pik3r1, plcg1, and ptpn11. Activation of plcg1 leads to the production of the cellular signaling molecules diacylglycerol and inositol 1,4,5-trisphosphate, mobilization of cytosolic Ca(2+) and the activation of protein kinase C. Phosphorylates pik3r1, the regulatory subunit of phosphatidylinositol 3-kinase, and thereby mediates activation of the akt1 signaling pathway. Mediates activation of hras and of the MAP kinases mapk1/erk2 and/or mapk3/erk1. Promotes activation of stat family members stat1, stat3 and stat5a and/or stat5b. Receptor signaling is down-regulated by protein phosphatases that dephosphorylate the receptor and its down-stream effectors, and by rapid internalization of the activated receptor. This Xenopus laevis (African clawed frog) protein is Platelet-derived growth factor receptor alpha (pdgfra).